The primary structure comprises 844 residues: Elongation factor 2 (844 aa).

In terms of domain architecture, tr-type G spans 17–255; that stretch reads TNVRNMSVIA…LWGDNYFNPK (239 aa). Position 26-33 (26-33) interacts with GTP; it reads AHVDHGKS. Residues T57 and T59 each carry the phosphothreonine modification. Residues 160-163 and 215-217 contribute to the GTP site; these read NKVD and SGL. H700 carries the post-translational modification Diphthamide.

The protein belongs to the TRAFAC class translation factor GTPase superfamily. Classic translation factor GTPase family. EF-G/EF-2 subfamily.

It is found in the cytoplasm. It catalyses the reaction GTP + H2O = GDP + phosphate + H(+). Its function is as follows. Catalyzes the GTP-dependent ribosomal translocation step during translation elongation. During this step, the ribosome changes from the pre-translocational (PRE) to the post-translocational (POST) state as the newly formed A-site-bound peptidyl-tRNA and P-site-bound deacylated tRNA move to the P and E sites, respectively. Catalyzes the coordinated movement of the two tRNA molecules, the mRNA and conformational changes in the ribosome. This Neurospora crassa (strain ATCC 24698 / 74-OR23-1A / CBS 708.71 / DSM 1257 / FGSC 987) protein is Elongation factor 2 (cot-3).